Here is a 198-residue protein sequence, read N- to C-terminus: Na(+)-translocating NADH-quinone reductase subunit E (198 aa).

6 helical membrane-spanning segments follow: residues 11–31 (SVFI…FLAV), 35–55 (VSTA…SVPV), 77–97 (FLNF…LEMI), 110–130 (GIFL…SFMV), 140–160 (VVYG…LAGI), and 176–196 (LGIT…FSGV).

It belongs to the NqrDE/RnfAE family. As to quaternary structure, composed of six subunits; NqrA, NqrB, NqrC, NqrD, NqrE and NqrF.

It localises to the cell inner membrane. The enzyme catalyses a ubiquinone + n Na(+)(in) + NADH + H(+) = a ubiquinol + n Na(+)(out) + NAD(+). In terms of biological role, NQR complex catalyzes the reduction of ubiquinone-1 to ubiquinol by two successive reactions, coupled with the transport of Na(+) ions from the cytoplasm to the periplasm. NqrA to NqrE are probably involved in the second step, the conversion of ubisemiquinone to ubiquinol. This is Na(+)-translocating NADH-quinone reductase subunit E from Histophilus somni (strain 129Pt) (Haemophilus somnus).